A 59-amino-acid chain; its full sequence is UPF0509 protein YciZ (59 aa).

Belongs to the UPF0509 family.

The polypeptide is UPF0509 protein YciZ (Salmonella agona (strain SL483)).